A 570-amino-acid polypeptide reads, in one-letter code: Proline--tRNA ligase (570 aa).

This sequence belongs to the class-II aminoacyl-tRNA synthetase family. ProS type 1 subfamily. Homodimer.

It is found in the cytoplasm. The enzyme catalyses tRNA(Pro) + L-proline + ATP = L-prolyl-tRNA(Pro) + AMP + diphosphate. Catalyzes the attachment of proline to tRNA(Pro) in a two-step reaction: proline is first activated by ATP to form Pro-AMP and then transferred to the acceptor end of tRNA(Pro). As ProRS can inadvertently accommodate and process non-cognate amino acids such as alanine and cysteine, to avoid such errors it has two additional distinct editing activities against alanine. One activity is designated as 'pretransfer' editing and involves the tRNA(Pro)-independent hydrolysis of activated Ala-AMP. The other activity is designated 'posttransfer' editing and involves deacylation of mischarged Ala-tRNA(Pro). The misacylated Cys-tRNA(Pro) is not edited by ProRS. The polypeptide is Proline--tRNA ligase (Clostridium tetani (strain Massachusetts / E88)).